The primary structure comprises 74 residues: MLEGAKLMGAGAATIALAGAAIGIGNVFSSLIHSVARNPSLAKQLFGYAILGFALTEAIALFALMMAFLISFVF.

Transmembrane regions (helical) follow at residues 8-28 and 50-70; these read MGAG…GNVF and ILGF…AFLI.

This sequence belongs to the ATPase C chain family. F-type ATPases have 2 components, CF(1) - the catalytic core - and CF(0) - the membrane proton channel. CF(1) has five subunits: alpha(3), beta(3), gamma(1), delta(1), epsilon(1). CF(0) has three main subunits: a, b and c.

It localises to the mitochondrion membrane. This protein is one of the chains of the nonenzymatic membrane component (F0) of mitochondrial ATPase. The sequence is that of ATP synthase subunit 9, mitochondrial (ATP9) from Solanum lycopersicum (Tomato).